A 126-amino-acid chain; its full sequence is uncharacterized protein (126 aa).

An HTH hxlR-type domain is found at 20-118 (CPSREVLKHV…WIELNLPEVL (99 aa)).

This is an uncharacterized protein from Escherichia coli (strain K12).